The primary structure comprises 187 residues: Elongation factor P (187 aa).

Belongs to the elongation factor P family.

The protein resides in the cytoplasm. It functions in the pathway protein biosynthesis; polypeptide chain elongation. In terms of biological role, involved in peptide bond synthesis. Stimulates efficient translation and peptide-bond synthesis on native or reconstituted 70S ribosomes in vitro. Probably functions indirectly by altering the affinity of the ribosome for aminoacyl-tRNA, thus increasing their reactivity as acceptors for peptidyl transferase. This chain is Elongation factor P, found in Corynebacterium kroppenstedtii (strain DSM 44385 / JCM 11950 / CIP 105744 / CCUG 35717).